We begin with the raw amino-acid sequence, 156 residues long: 6,7-dimethyl-8-ribityllumazine synthase (156 aa).

Residues phenylalanine 25, 59–61 (AWE), and 83–85 (AVI) each bind 5-amino-6-(D-ribitylamino)uracil. Residue 88–89 (ST) coordinates (2S)-2-hydroxy-3-oxobutyl phosphate. Histidine 91 functions as the Proton donor in the catalytic mechanism. 5-amino-6-(D-ribitylamino)uracil is bound at residue asparagine 116. Arginine 130 is a (2S)-2-hydroxy-3-oxobutyl phosphate binding site.

The protein belongs to the DMRL synthase family. Forms an icosahedral capsid composed of 60 subunits, arranged as a dodecamer of pentamers.

The catalysed reaction is (2S)-2-hydroxy-3-oxobutyl phosphate + 5-amino-6-(D-ribitylamino)uracil = 6,7-dimethyl-8-(1-D-ribityl)lumazine + phosphate + 2 H2O + H(+). The protein operates within cofactor biosynthesis; riboflavin biosynthesis; riboflavin from 2-hydroxy-3-oxobutyl phosphate and 5-amino-6-(D-ribitylamino)uracil: step 1/2. Functionally, catalyzes the formation of 6,7-dimethyl-8-ribityllumazine by condensation of 5-amino-6-(D-ribitylamino)uracil with 3,4-dihydroxy-2-butanone 4-phosphate. This is the penultimate step in the biosynthesis of riboflavin. The polypeptide is 6,7-dimethyl-8-ribityllumazine synthase (Acinetobacter baylyi (strain ATCC 33305 / BD413 / ADP1)).